The following is a 491-amino-acid chain: Probable aspartyl aminopeptidase (491 aa).

His-90 contributes to the Zn(2+) binding site. Substrate is bound at residue His-168. Residue Asp-278 participates in Zn(2+) binding. Substrate is bound at residue Glu-315. Residues Glu-316 and Asp-361 each coordinate Zn(2+). 4 residues coordinate substrate: Asp-361, His-364, Lys-389, and Tyr-396. His-455 is a Zn(2+) binding site.

The protein belongs to the peptidase M18 family. In terms of assembly, tetrahedron-shaped homododecamer built from six homodimers. The cofactor is Zn(2+).

Its subcellular location is the cytoplasm. The enzyme catalyses Release of an N-terminal aspartate or glutamate from a peptide, with a preference for aspartate.. In terms of biological role, likely to play an important role in intracellular protein and peptide metabolism. This Ricinus communis (Castor bean) protein is Probable aspartyl aminopeptidase.